The following is a 124-amino-acid chain: Fluoride-specific ion channel FluC (124 aa).

4 helical membrane passes run 5–25 (VYIALLGALGCLCRYFLSGFV), 32–52 (SFPYGTLAVNLIGAFLIGLIM), 67–87 (FAITIGFLGGLTTFSTFSFET), and 96–116 (LLIAIVNVLVSVVACLTCTWI). Residues Gly75 and Thr78 each contribute to the Na(+) site.

It belongs to the fluoride channel Fluc/FEX (TC 1.A.43) family.

It is found in the cell inner membrane. The enzyme catalyses fluoride(in) = fluoride(out). Na(+) is not transported, but it plays an essential structural role and its presence is essential for fluoride channel function. In terms of biological role, fluoride-specific ion channel. Important for reducing fluoride concentration in the cell, thus reducing its toxicity. The sequence is that of Fluoride-specific ion channel FluC from Citrifermentans bemidjiense (strain ATCC BAA-1014 / DSM 16622 / JCM 12645 / Bem) (Geobacter bemidjiensis).